The sequence spans 408 residues: MAGRGFSWGPGHLNEDNARFLLLAALIVLYLLGGAAVFSALELAHERQAKQRWEERLANFSRGHNLSRDELRGFLRHYEEATRAGIRVDNVRPRWDFTGAFYFVGTVVSTIGFGMTTPATVGGKIFLIFYGLVGCSSTILFFNLFLERLITIIAYIMKSCHQRQLRRRGALPQESLKDAGQCEVDSLAGWKPSVYYVMLILCTASILISCCASAMYTPIEGWSYFDSLYFCFVAFSTIGFGDLVSSQNAHYESQGLYRFANFVFILMGVCCIYSLFNVISILIKQSLNWILRKMDSGCCPQCQRGLLRSRRNVVMPGSVRNRCNISIETDGVAESDTDGRRLSGEMISMKDLLAANKASLAILQKQLSEMANGCPHQTSTLARDNEFSGGVGAFAIMNNRLAETSGDR.

Residues 1 to 19 (MAGRGFSWGPGHLNEDNAR) are Cytoplasmic-facing. Residues 20–40 (FLLLAALIVLYLLGGAAVFSA) form a helical membrane-spanning segment. N-linked (GlcNAc...) asparagine glycans are attached at residues asparagine 59 and asparagine 65. Positions 95-115 (WDFTGAFYFVGTVVSTIGFGM) form an intramembrane region, pore-forming. Residues threonine 110, isoleucine 111, and glycine 112 each coordinate K(+). A selectivity filter 1 region spans residues 110 to 115 (TIGFGM). The helical transmembrane segment at 125 to 145 (IFLIFYGLVGCSSTILFFNLF) threads the bilayer. The Cytoplasmic portion of the chain corresponds to 146-193 (LERLITIIAYIMKSCHQRQLRRRGALPQESLKDAGQCEVDSLAGWKPS). The chain crosses the membrane as a helical span at residues 194–214 (VYYVMLILCTASILISCCASA). The segment at residues 224-244 (YFDSLYFCFVAFSTIGFGDLV) is an intramembrane region (pore-forming). K(+)-binding residues include threonine 237, isoleucine 238, glycine 239, and phenylalanine 240. The tract at residues 237–242 (TIGFGD) is selectivity filter 2. Residues 263–283 (VFILMGVCCIYSLFNVISILI) form a helical membrane-spanning segment. Over 284-408 (KQSLNWILRK…NRLAETSGDR (125 aa)) the chain is Cytoplasmic.

It belongs to the two pore domain potassium channel (TC 1.A.1.8) family. As to quaternary structure, homodimer. Heterodimer with KCNK12. In terms of tissue distribution, expressed in microglia (at protein level).

The protein resides in the cell membrane. The enzyme catalyses K(+)(in) = K(+)(out). The channel conductance is activated by arachidonic acid and inhibited by Ba(2+) ions, volatile anesthetics such as halothane and antiarrhythmic drugs mexiletine and lidocaine. Insensitive to extracellular pH change. Its function is as follows. K(+) channel that conducts outward rectifying tonic currents potentiated by purinergic signals. Homo- and heterodimerizes to form functional channels with distinct regulatory and gating properties. Contributes most of K(+) currents at the plasma membrane of resting microglia. Maintains a depolarized membrane potential required for proper ramified microglia morphology and phagocytosis, selectively mediating microglial pruning of presynaptic compartments at hippocampal excitatory synapses. Upon local release of ATP caused by neuronal injury or infection, it is potentiated by P2RY12 and P2RX7 receptor signaling and contributes to ATP-triggered K(+) efflux underlying microglial NLRP3 inflammasome assembly and IL1B release. The protein is Potassium channel subfamily K member 13 of Homo sapiens (Human).